The chain runs to 240 residues: Proteasome subunit alpha (240 aa).

This sequence belongs to the peptidase T1A family. As to quaternary structure, the 20S proteasome core is composed of 14 alpha and 14 beta subunits that assemble into four stacked heptameric rings, resulting in a barrel-shaped structure. The two inner rings, each composed of seven catalytic beta subunits, are sandwiched by two outer rings, each composed of seven alpha subunits. The catalytic chamber with the active sites is on the inside of the barrel. Has a gated structure, the ends of the cylinder being occluded by the N-termini of the alpha-subunits. Is capped by the proteasome-associated ATPase, ARC.

It is found in the cytoplasm. It participates in protein degradation; proteasomal Pup-dependent pathway. The formation of the proteasomal ATPase ARC-20S proteasome complex, likely via the docking of the C-termini of ARC into the intersubunit pockets in the alpha-rings, may trigger opening of the gate for substrate entry. Interconversion between the open-gate and close-gate conformations leads to a dynamic regulation of the 20S proteasome proteolysis activity. Component of the proteasome core, a large protease complex with broad specificity involved in protein degradation. The polypeptide is Proteasome subunit alpha (Frankia casuarinae (strain DSM 45818 / CECT 9043 / HFP020203 / CcI3)).